The sequence spans 281 residues: ATP synthase gamma chain (281 aa).

Belongs to the ATPase gamma chain family. F-type ATPases have 2 components, CF(1) - the catalytic core - and CF(0) - the membrane proton channel. CF(1) has five subunits: alpha(3), beta(3), gamma(1), delta(1), epsilon(1). CF(0) has three main subunits: a, b and c.

It is found in the cell membrane. In terms of biological role, produces ATP from ADP in the presence of a proton gradient across the membrane. The gamma chain is believed to be important in regulating ATPase activity and the flow of protons through the CF(0) complex. The chain is ATP synthase gamma chain from Mesoplasma florum (strain ATCC 33453 / NBRC 100688 / NCTC 11704 / L1) (Acholeplasma florum).